The chain runs to 429 residues: Adenylosuccinate synthetase (429 aa).

GTP-binding positions include 12–18 and 40–42; these read GDEGKGK and GHT. The active-site Proton acceptor is the Asp13. Mg(2+) is bound by residues Asp13 and Gly40. IMP contacts are provided by residues 13–16, 38–41, Thr128, Arg142, Gln223, Thr238, and Arg302; these read DEGK and NAGH. Residue His41 is the Proton donor of the active site. 298–304 is a substrate binding site; the sequence is TTTGRPR. Residues Arg304, 330 to 332, and 412 to 414 each bind GTP; these read SID and SVG.

The protein belongs to the adenylosuccinate synthetase family. Homodimer. It depends on Mg(2+) as a cofactor.

It localises to the cytoplasm. It catalyses the reaction IMP + L-aspartate + GTP = N(6)-(1,2-dicarboxyethyl)-AMP + GDP + phosphate + 2 H(+). It functions in the pathway purine metabolism; AMP biosynthesis via de novo pathway; AMP from IMP: step 1/2. Plays an important role in the de novo pathway of purine nucleotide biosynthesis. Catalyzes the first committed step in the biosynthesis of AMP from IMP. This chain is Adenylosuccinate synthetase, found in Bacillus cytotoxicus (strain DSM 22905 / CIP 110041 / 391-98 / NVH 391-98).